Consider the following 550-residue polypeptide: Arginine--tRNA ligase (550 aa).

Positions 130 to 140 match the 'HIGH' region motif; that stretch reads ANPTGPIHIGG.

It belongs to the class-I aminoacyl-tRNA synthetase family. As to quaternary structure, monomer.

The protein resides in the cytoplasm. It catalyses the reaction tRNA(Arg) + L-arginine + ATP = L-arginyl-tRNA(Arg) + AMP + diphosphate. This chain is Arginine--tRNA ligase (argS), found in Mycolicibacterium smegmatis (strain ATCC 700084 / mc(2)155) (Mycobacterium smegmatis).